The sequence spans 171 residues: uncharacterized protein (171 aa).

Disordered regions lie at residues 1–50 (MSHR…THLS) and 71–91 (RIDK…PMMK).

This is an uncharacterized protein from Caenorhabditis elegans.